Consider the following 192-residue polypeptide: UPF0149 protein VIBHAR_03551 (192 aa).

This sequence belongs to the UPF0149 family.

The polypeptide is UPF0149 protein VIBHAR_03551 (Vibrio campbellii (strain ATCC BAA-1116)).